The chain runs to 157 residues: Endoribonuclease YbeY (157 aa).

Histidine 116, histidine 120, and histidine 126 together coordinate Zn(2+).

The protein belongs to the endoribonuclease YbeY family. It depends on Zn(2+) as a cofactor.

It localises to the cytoplasm. Functionally, single strand-specific metallo-endoribonuclease involved in late-stage 70S ribosome quality control and in maturation of the 3' terminus of the 16S rRNA. In Arthrobacter sp. (strain FB24), this protein is Endoribonuclease YbeY.